The following is a 65-amino-acid chain: Large ribosomal subunit protein bL35 (65 aa).

This sequence belongs to the bacterial ribosomal protein bL35 family.

The polypeptide is Large ribosomal subunit protein bL35 (Heliobacterium modesticaldum (strain ATCC 51547 / Ice1)).